The sequence spans 1070 residues: Phosphatidylinositol 4,5-bisphosphate 3-kinase catalytic subunit beta isoform (1070 aa).

Residues 26 to 115 (SDGSIPVDFL…LPVLKLVTRS (90 aa)) form the PI3K-ABD domain. Positions 194 to 285 (GGKLIVAVHF…RALPHFILVE (92 aa)) constitute a PI3K-RBD domain. A Phosphoserine modification is found at Ser-324. A C2 PI3K-type domain is found at 327–496 (WENNNPFQIV…NATALHVKFP (170 aa)). Positions 410-418 (KVKTKKSTK) match the Nuclear localization signal motif. A PIK helical domain is found at 524–701 (ANVSSRGGKK…GVILEAYCRG (178 aa)). Residues 772-1053 (YVEKCKYMDS…KFDEALRESW (282 aa)) enclose the PI3K/PI4K catalytic domain. The tract at residues 778 to 784 (YMDSKMK) is G-loop. Positions 916–924 (GIGDRHSDN) are catalytic loop. The segment at 935–961 (HIDFGHILGNFKSKFGIKRERVPFILT) is activation loop. The residue at position 1070 (Ser-1070) is a Phosphoserine; by autocatalysis.

This sequence belongs to the PI3/PI4-kinase family. Heterodimer of a catalytic subunit PIK3CB and a p85 regulatory subunit (PIK3R1, PIK3R2 or PIK3R3). Interaction with PIK3R2 is required for nuclear localization and nuclear export. Part of a complex with PIK3R1 and PTEN. Binding to PTEN may antagonize the lipid kinase activity under normal growth conditions. Part of a complex involved in autophagosome formation composed of PIK3C3 and PIK3R4. Interacts with BECN1, ATG14 and RAB5A. In terms of processing, autophosphorylation at Ser-1070 negatively regulates the phosphatidylinositol-4,5-bisphosphate 3-kinase activity. In terms of tissue distribution, expressed ubiquitously.

It is found in the cytoplasm. The protein localises to the nucleus. The catalysed reaction is a 1,2-diacyl-sn-glycero-3-phospho-(1D-myo-inositol-4,5-bisphosphate) + ATP = a 1,2-diacyl-sn-glycero-3-phospho-(1D-myo-inositol-3,4,5-trisphosphate) + ADP + H(+). It carries out the reaction 1-octadecanoyl-2-(5Z,8Z,11Z,14Z)-eicosatetraenoyl-sn-glycero-3-phospho-1D-myo-inositol 4,5-bisphosphate + ATP = 1-octadecanoyl-2-(5Z,8Z,11Z,14Z-eicosatetraenoyl)-sn-glycero-3-phospho-(1D-myo-inositol 3,4,5-triphosphate) + ADP + H(+). It catalyses the reaction L-seryl-[protein] + ATP = O-phospho-L-seryl-[protein] + ADP + H(+). The protein operates within phospholipid metabolism; phosphatidylinositol phosphate biosynthesis. Phosphoinositide-3-kinase (PI3K) phosphorylates phosphatidylinositol derivatives at position 3 of the inositol ring to produce 3-phosphoinositides. Uses ATP and PtdIns(4,5)P2 (phosphatidylinositol 4,5-bisphosphate) to generate phosphatidylinositol 3,4,5-trisphosphate (PIP3). PIP3 plays a key role by recruiting PH domain-containing proteins to the membrane, including AKT1 and PDPK1, activating signaling cascades involved in cell growth, survival, proliferation, motility and morphology. Involved in the activation of AKT1 upon stimulation by G-protein coupled receptors (GPCRs) ligands such as CXCL12, sphingosine 1-phosphate, and lysophosphatidic acid. May also act downstream receptor tyrosine kinases. Required in different signaling pathways for stable platelet adhesion and aggregation. Plays a role in platelet activation signaling triggered by GPCRs, alpha-IIb/beta-3 integrins (ITGA2B/ ITGB3) and ITAM (immunoreceptor tyrosine-based activation motif)-bearing receptors such as GP6. Regulates the strength of adhesion of ITGA2B/ ITGB3 activated receptors necessary for the cellular transmission of contractile forces. Required for platelet aggregation induced by F2 (thrombin) and thromboxane A2 (TXA2). Has a role in cell survival. May have a role in cell migration. Involved in the early stage of autophagosome formation. Modulates the intracellular level of PtdIns3P (phosphatidylinositol 3-phosphate) and activates PIK3C3 kinase activity. May act as a scaffold, independently of its lipid kinase activity to positively regulate autophagy. May have a role in insulin signaling as scaffolding protein in which the lipid kinase activity is not required. May have a kinase-independent function in regulating cell proliferation and in clathrin-mediated endocytosis. Mediator of oncogenic signal in cell lines lacking PTEN. The lipid kinase activity is necessary for its role in oncogenic transformation. Required for the growth of ERBB2 and RAS driven tumors. Also has a protein kinase activity showing autophosphorylation. The polypeptide is Phosphatidylinositol 4,5-bisphosphate 3-kinase catalytic subunit beta isoform (PIK3CB) (Homo sapiens (Human)).